The primary structure comprises 612 residues: Dihydroxy-acid dehydratase (612 aa).

Residue D81 participates in Mg(2+) binding. A [2Fe-2S] cluster-binding site is contributed by C122. Residues D123 and K124 each contribute to the Mg(2+) site. N6-carboxylysine is present on K124. Residue C195 coordinates [2Fe-2S] cluster. A Mg(2+)-binding site is contributed by E491. S517 serves as the catalytic Proton acceptor.

The protein belongs to the IlvD/Edd family. Homodimer. Requires [2Fe-2S] cluster as cofactor. The cofactor is Mg(2+).

The enzyme catalyses (2R)-2,3-dihydroxy-3-methylbutanoate = 3-methyl-2-oxobutanoate + H2O. It carries out the reaction (2R,3R)-2,3-dihydroxy-3-methylpentanoate = (S)-3-methyl-2-oxopentanoate + H2O. The protein operates within amino-acid biosynthesis; L-isoleucine biosynthesis; L-isoleucine from 2-oxobutanoate: step 3/4. Its pathway is amino-acid biosynthesis; L-valine biosynthesis; L-valine from pyruvate: step 3/4. Functionally, functions in the biosynthesis of branched-chain amino acids. Catalyzes the dehydration of (2R,3R)-2,3-dihydroxy-3-methylpentanoate (2,3-dihydroxy-3-methylvalerate) into 2-oxo-3-methylpentanoate (2-oxo-3-methylvalerate) and of (2R)-2,3-dihydroxy-3-methylbutanoate (2,3-dihydroxyisovalerate) into 2-oxo-3-methylbutanoate (2-oxoisovalerate), the penultimate precursor to L-isoleucine and L-valine, respectively. The protein is Dihydroxy-acid dehydratase of Rhizobium etli (strain ATCC 51251 / DSM 11541 / JCM 21823 / NBRC 15573 / CFN 42).